The sequence spans 458 residues: Argininosuccinate lyase (458 aa).

Belongs to the lyase 1 family. Argininosuccinate lyase subfamily.

The protein localises to the cytoplasm. The catalysed reaction is 2-(N(omega)-L-arginino)succinate = fumarate + L-arginine. Its pathway is amino-acid biosynthesis; L-arginine biosynthesis; L-arginine from L-ornithine and carbamoyl phosphate: step 3/3. This chain is Argininosuccinate lyase, found in Salmonella typhi.